The sequence spans 306 residues: Porphobilinogen deaminase (306 aa).

The residue at position 237 (C237) is an S-(dipyrrolylmethanemethyl)cysteine.

This sequence belongs to the HMBS family. As to quaternary structure, monomer. The cofactor is dipyrromethane.

The enzyme catalyses 4 porphobilinogen + H2O = hydroxymethylbilane + 4 NH4(+). The protein operates within porphyrin-containing compound metabolism; protoporphyrin-IX biosynthesis; coproporphyrinogen-III from 5-aminolevulinate: step 2/4. Its function is as follows. Tetrapolymerization of the monopyrrole PBG into the hydroxymethylbilane pre-uroporphyrinogen in several discrete steps. The protein is Porphobilinogen deaminase of Syntrophus aciditrophicus (strain SB).